A 263-amino-acid chain; its full sequence is Probable ABC transporter permease protein slr1045 (263 aa).

Transmembrane regions (helical) follow at residues 12–32, 52–72, 97–117, 140–162, 167–186, 192–212, and 234–254; these read LWFQ…LHIL, SMAI…IQVA, APVL…AAEI, LVVP…SLFV, GLVI…LNSV, LWDV…IAII, and AVVT…WLMF.

This sequence belongs to the MlaE permease family.

It is found in the cell membrane. Could be part of an ABC transporter complex. This Synechocystis sp. (strain ATCC 27184 / PCC 6803 / Kazusa) protein is Probable ABC transporter permease protein slr1045.